We begin with the raw amino-acid sequence, 458 residues long: ATP synthase subunit beta (458 aa).

ATP is bound at residue 148–155 (GGAGVGKT).

Belongs to the ATPase alpha/beta chains family. In terms of assembly, F-type ATPases have 2 components, CF(1) - the catalytic core - and CF(0) - the membrane proton channel. CF(1) has five subunits: alpha(3), beta(3), gamma(1), delta(1), epsilon(1). CF(0) has three main subunits: a(1), b(2) and c(9-12). The alpha and beta chains form an alternating ring which encloses part of the gamma chain. CF(1) is attached to CF(0) by a central stalk formed by the gamma and epsilon chains, while a peripheral stalk is formed by the delta and b chains.

It is found in the cell inner membrane. It carries out the reaction ATP + H2O + 4 H(+)(in) = ADP + phosphate + 5 H(+)(out). Its function is as follows. Produces ATP from ADP in the presence of a proton gradient across the membrane. The catalytic sites are hosted primarily by the beta subunits. The polypeptide is ATP synthase subunit beta (Ectopseudomonas mendocina (strain ymp) (Pseudomonas mendocina)).